We begin with the raw amino-acid sequence, 275 residues long: Undecaprenyl-diphosphatase (275 aa).

Helical transmembrane passes span 2–22 (LDIF…FLPI), 43–63 (FTDM…VVLY), 83–103 (WVLW…GLPL), 111–131 (LMNW…FIVI), 147–167 (TLPY…LIPG), 186–206 (YVAT…ASLL), 221–241 (LQGA…YLSI), and 255–275 (AFGW…TLIH).

It belongs to the UppP family.

The protein resides in the cell membrane. It carries out the reaction di-trans,octa-cis-undecaprenyl diphosphate + H2O = di-trans,octa-cis-undecaprenyl phosphate + phosphate + H(+). In terms of biological role, catalyzes the dephosphorylation of undecaprenyl diphosphate (UPP). Confers resistance to bacitracin. The sequence is that of Undecaprenyl-diphosphatase from Lactiplantibacillus plantarum (strain ATCC BAA-793 / NCIMB 8826 / WCFS1) (Lactobacillus plantarum).